Consider the following 482-residue polypeptide: Alanine aminotransferase 2 (482 aa).

Lysine 299 carries the N6-(pyridoxal phosphate)lysine modification.

This sequence belongs to the class-I pyridoxal-phosphate-dependent aminotransferase family. Alanine aminotransferase subfamily. In terms of assembly, homodimer. Pyridoxal 5'-phosphate serves as cofactor.

It catalyses the reaction L-alanine + 2-oxoglutarate = pyruvate + L-glutamate. The protein operates within photosynthesis; C4 acid pathway. It functions in the pathway amino-acid degradation; L-alanine degradation via transaminase pathway; pyruvate from L-alanine: step 1/1. Functionally, transfer of C3 units between the cytosol of mesophyll and bundle sheath cells to maintain a nitrogen-carbon balance in the C4-dicarboxylic pathway. This Hordeum vulgare (Barley) protein is Alanine aminotransferase 2.